The sequence spans 305 residues: 4-diphosphocytidyl-2-C-methyl-D-erythritol kinase (305 aa).

Lys17 is an active-site residue. 111 to 121 is a binding site for ATP; the sequence is PVASGIGGGSA. Residue Asp154 is part of the active site.

It belongs to the GHMP kinase family. IspE subfamily.

The enzyme catalyses 4-CDP-2-C-methyl-D-erythritol + ATP = 4-CDP-2-C-methyl-D-erythritol 2-phosphate + ADP + H(+). Its pathway is isoprenoid biosynthesis; isopentenyl diphosphate biosynthesis via DXP pathway; isopentenyl diphosphate from 1-deoxy-D-xylulose 5-phosphate: step 3/6. Its function is as follows. Catalyzes the phosphorylation of the position 2 hydroxy group of 4-diphosphocytidyl-2C-methyl-D-erythritol. The sequence is that of 4-diphosphocytidyl-2-C-methyl-D-erythritol kinase from Gluconacetobacter diazotrophicus (strain ATCC 49037 / DSM 5601 / CCUG 37298 / CIP 103539 / LMG 7603 / PAl5).